The following is a 505-amino-acid chain: Lysine--tRNA ligase (505 aa).

Positions 415 and 422 each coordinate Mg(2+).

This sequence belongs to the class-II aminoacyl-tRNA synthetase family. As to quaternary structure, homodimer. Requires Mg(2+) as cofactor.

Its subcellular location is the cytoplasm. It catalyses the reaction tRNA(Lys) + L-lysine + ATP = L-lysyl-tRNA(Lys) + AMP + diphosphate. This is Lysine--tRNA ligase from Escherichia coli O157:H7.